The sequence spans 224 residues: UPF0173 metal-dependent hydrolase TK0141 (224 aa).

Belongs to the UPF0173 family.

The sequence is that of UPF0173 metal-dependent hydrolase TK0141 from Thermococcus kodakarensis (strain ATCC BAA-918 / JCM 12380 / KOD1) (Pyrococcus kodakaraensis (strain KOD1)).